Here is a 319-residue protein sequence, read N- to C-terminus: MSANYWHSTQCRFWSFTKEQLVTMRQKLEEDNAELVRMFPLPQQRRLYIYFNQQLIRLAKRLTIRQQSMATAQVYMKRFYSKVEIRRTNPYLVIATAIYLACKIEESPQHIRLIVTEARQMWGDLVAIDTSKLGECEFFMISEMRSQLIVFQPYRTITALRNELSLVDDEVQLARSVINDHFMTDLPLLYPPHIIAMVAILLALVLRPNNSGPGQSTSGAAAAAGLAAAQQALMRAQGQQAQGGMPEPAAAEPKEKRQQDRVSRVQKFAKWLVDSNVEIASMVDATQEIISFYECYEHYNDKLTREQINRFVKARGLDK.

Residues 53-142 form the Cyclin N-terminal domain; sequence QQLIRLAKRL…LGECEFFMIS (90 aa). Over residues 237–251 the composition is skewed to low complexity; sequence QGQQAQGGMPEPAAA. Residues 237–261 form a disordered region; it reads QGQQAQGGMPEPAAAEPKEKRQQDR. The segment covering 252–261 has biased composition (basic and acidic residues); it reads EPKEKRQQDR.

This sequence belongs to the cyclin family. Cyclin C subfamily. Component of the SRB8-11 complex, a regulatory module of the Mediator complex. Interacts with SSN3/FCK1.

It localises to the nucleus. In terms of biological role, component of the SRB8-11 complex. The SRB8-11 complex is a regulatory module of the Mediator complex which is itself involved in regulation of basal and activated RNA polymerase II-dependent transcription. The SRB8-11 complex may be involved in the transcriptional repression of a subset of genes regulated by Mediator. It may inhibit the association of the Mediator complex with RNA polymerase II to form the holoenzyme complex. The SRB8-11 complex phosphorylates the C-terminal domain (CTD) of the largest subunit of RNA polymerase II. May play a role in signal transduction pathways regulating secondary metabolism and fungal development (conidiation). This Gibberella moniliformis (Maize ear and stalk rot fungus) protein is RNA polymerase II holoenzyme cyclin-like subunit (SSN8).